A 296-amino-acid polypeptide reads, in one-letter code: 4-hydroxybenzoate octaprenyltransferase (296 aa).

Transmembrane regions (helical) follow at residues 28 to 48 (PIGIYLLLWPTLTAVWIAGLG), 52 to 72 (LANVLIFGLGVVLMRAAGCCI), 102 to 122 (ALALFGILVAVSFLLVLCTNS), 145 to 167 (TYYPQVVLGAAYSWGIPMAFTAA), 174 to 196 (SAWLLYIANLLWTVGYDTYYAMV), 219 to 239 (MIILTLQMLSLGCLLLAGSRF), 241 to 261 (LGGWFHLGLLGAALCFAWEYW), and 275 to 295 (FLHNHWAGLLVFMGVVLDYAL).

Belongs to the UbiA prenyltransferase family. Mg(2+) serves as cofactor.

The protein resides in the cell inner membrane. It catalyses the reaction all-trans-octaprenyl diphosphate + 4-hydroxybenzoate = 4-hydroxy-3-(all-trans-octaprenyl)benzoate + diphosphate. It functions in the pathway cofactor biosynthesis; ubiquinone biosynthesis. Catalyzes the prenylation of para-hydroxybenzoate (PHB) with an all-trans polyprenyl group. Mediates the second step in the final reaction sequence of ubiquinone-8 (UQ-8) biosynthesis, which is the condensation of the polyisoprenoid side chain with PHB, generating the first membrane-bound Q intermediate 3-octaprenyl-4-hydroxybenzoate. This Pseudomonas putida (strain W619) protein is 4-hydroxybenzoate octaprenyltransferase.